We begin with the raw amino-acid sequence, 412 residues long: Serine hydroxymethyltransferase (412 aa).

(6S)-5,6,7,8-tetrahydrofolate-binding positions include L116 and 120-122 (GHL). An N6-(pyridoxal phosphate)lysine modification is found at K225. (6S)-5,6,7,8-tetrahydrofolate-binding positions include E241 and 350-352 (SPF).

This sequence belongs to the SHMT family. In terms of assembly, homodimer. Pyridoxal 5'-phosphate is required as a cofactor.

It localises to the cytoplasm. It catalyses the reaction (6R)-5,10-methylene-5,6,7,8-tetrahydrofolate + glycine + H2O = (6S)-5,6,7,8-tetrahydrofolate + L-serine. It participates in one-carbon metabolism; tetrahydrofolate interconversion. The protein operates within amino-acid biosynthesis; glycine biosynthesis; glycine from L-serine: step 1/1. In terms of biological role, catalyzes the reversible interconversion of serine and glycine with tetrahydrofolate (THF) serving as the one-carbon carrier. This reaction serves as the major source of one-carbon groups required for the biosynthesis of purines, thymidylate, methionine, and other important biomolecules. Also exhibits THF-independent aldolase activity toward beta-hydroxyamino acids, producing glycine and aldehydes, via a retro-aldol mechanism. The chain is Serine hydroxymethyltransferase from Enterococcus faecalis (strain ATCC 700802 / V583).